Reading from the N-terminus, the 375-residue chain is Growth/differentiation factor 8 (375 aa).

The N-terminal stretch at 1–18 (MQKLQISVYIYLFMLIVA) is a signal peptide. The propeptide occupies 19–266 (GPVDLNENSE…VTDTPKRSRR (248 aa)). N47 and N71 each carry an N-linked (GlcNAc...) asparagine glycan. 4 disulfides stabilise this stretch: C272–C282, C281–C340, C309–C372, and C313–C374.

It belongs to the TGF-beta family. Homodimer; disulfide-linked. Interacts with WFIKKN2, leading to inhibit its activity. Interacts with FSTL3. Post-translationally, synthesized as large precursor molecule that undergoes proteolytic cleavage to generate an N-terminal propeptide and a disulfide linked C-terminal dimer, which is the biologically active molecule. The circulating form consists of a latent complex of the C-terminal dimer and other proteins, including its propeptide, which maintain the C-terminal dimer in a latent, inactive state. Ligand activation requires additional cleavage of the prodomain by a tolloid-like metalloproteinase.

It localises to the secreted. Its function is as follows. Acts specifically as a negative regulator of skeletal muscle growth. This Bubalus bubalis (Domestic water buffalo) protein is Growth/differentiation factor 8 (MSTN).